Consider the following 286-residue polypeptide: Putative sugar uptake protein lin0215 (286 aa).

8 helical membrane passes run 4 to 26 (MIAL…FGGS), 33 to 55 (GMTL…VYTL), 114 to 136 (LRII…TSYA), 149 to 167 (GLIT…VVLI), 177 to 194 (AILP…IMTH), 207 to 226 (LLLI…MVHA), 230 to 252 (VGVA…GGIV), and 264 to 283 (LYVI…IGVA).

Belongs to the GRP transporter (TC 2.A.7.5) family.

The protein resides in the cell membrane. In Listeria innocua serovar 6a (strain ATCC BAA-680 / CLIP 11262), this protein is Putative sugar uptake protein lin0215.